We begin with the raw amino-acid sequence, 324 residues long: Ribose-phosphate pyrophosphokinase (324 aa).

ATP-binding positions include 45–47 (NGE) and 104–105 (RQ). Residues H138 and D178 each coordinate Mg(2+). K201 is an active-site residue. Residues R203, D229, and 233–237 (DTGGT) each bind D-ribose 5-phosphate.

The protein belongs to the ribose-phosphate pyrophosphokinase family. Class I subfamily. In terms of assembly, homohexamer. It depends on Mg(2+) as a cofactor.

It localises to the cytoplasm. The catalysed reaction is D-ribose 5-phosphate + ATP = 5-phospho-alpha-D-ribose 1-diphosphate + AMP + H(+). The protein operates within metabolic intermediate biosynthesis; 5-phospho-alpha-D-ribose 1-diphosphate biosynthesis; 5-phospho-alpha-D-ribose 1-diphosphate from D-ribose 5-phosphate (route I): step 1/1. Involved in the biosynthesis of the central metabolite phospho-alpha-D-ribosyl-1-pyrophosphate (PRPP) via the transfer of pyrophosphoryl group from ATP to 1-hydroxyl of ribose-5-phosphate (Rib-5-P). In Streptomyces avermitilis (strain ATCC 31267 / DSM 46492 / JCM 5070 / NBRC 14893 / NCIMB 12804 / NRRL 8165 / MA-4680), this protein is Ribose-phosphate pyrophosphokinase.